The following is a 198-amino-acid chain: dTTP/UTP pyrophosphatase (198 aa).

Aspartate 72 acts as the Proton acceptor in catalysis.

Belongs to the Maf family. YhdE subfamily. A divalent metal cation is required as a cofactor.

It is found in the cytoplasm. The catalysed reaction is dTTP + H2O = dTMP + diphosphate + H(+). The enzyme catalyses UTP + H2O = UMP + diphosphate + H(+). Nucleoside triphosphate pyrophosphatase that hydrolyzes dTTP and UTP. May have a dual role in cell division arrest and in preventing the incorporation of modified nucleotides into cellular nucleic acids. In Pseudomonas fluorescens (strain Pf0-1), this protein is dTTP/UTP pyrophosphatase.